A 288-amino-acid chain; its full sequence is MFIQEPKKLIDTGEIGNASTGDILFDGGNKINSDFNAIYNAFGDQRKMAVANGTGADGQIIHATGYYQKHSITEYATPVKVGTRHDIDTSTVGVKVIIERGELGDCVEFINSNGSISVTNPLTIQAIDSIKGVSGNLVVTSPYSKVTLRCISSDNSTSVWNYSIESMFGQKESPAEGTWNISTSGSVDIPLFHRTEYNMAKLLVTCQSVDGRKIKTAEINILVDTVNSEVISSEYAVMRVGNETEEDEIANIAFSIKENYVTATISSSTVGMRAAVKVIATQKIGVAQ.

Residues 20-80 (TGDILFDGGN…SITEYATPVK (61 aa)) adopt a coiled-coil conformation.

As to quaternary structure, homotrimer. The gp9 trimer interacts with the long tail fiber (LTF) that comprises gp34 trimer, gp35, gp36 and a gp37 trimer. Part of the baseplate macromolecular complex which consists of gp5, gp5.4, gp27 (central spike complex); gp6, gp25, gp53 (inner baseplate); gp7, gp8 (intermediate baseplate); gp9, gp10, gp11, gp12 (peripheral); gp48 and gp54 (proximal region of the tail tube).

Its subcellular location is the virion. Peripheral baseplate protein that is part of the tail fiber network. Connects the long tail fibers to the baseplate and, after virus attachment to a host cell, probably changes its conformation to trigger the signal for tail contraction. Involved in the tail assembly. This Enterobacteria phage T4 (Bacteriophage T4) protein is Baseplate protein gp9 (9).